The following is a 131-amino-acid chain: CLAVATA3/ESR (CLE)-related protein ESR1 (131 aa).

A signal peptide spans 1 to 26 (MASRMGMVAIVSLFVCALAASTSVNA). Residues 49 to 131 (RQQQQGGFIG…IGPPPLSDRY (83 aa)) form a disordered region. A hydroxyproline mark is found at proline 81 and proline 84. Proline 84 is a glycosylation site (O-linked (Ara...) hydroxyproline).

It belongs to the CLV3/ESR signal peptide family. Post-translationally, the O-glycosylation (arabinosylation) of the hydroxyproline Pro-84 enhances binding affinity of the ESR1p peptide for its receptor. In terms of tissue distribution, seed endosperm.

It localises to the secreted. Its subcellular location is the extracellular space. In terms of biological role, extracellular signal peptide that regulates cell fate. This Zea mays (Maize) protein is CLAVATA3/ESR (CLE)-related protein ESR1.